A 407-amino-acid chain; its full sequence is Multifunctional CCA protein (407 aa).

Glycine 8 and arginine 11 together coordinate ATP. 2 residues coordinate CTP: glycine 8 and arginine 11. Positions 21 and 23 each coordinate Mg(2+). 3 residues coordinate ATP: arginine 91, arginine 137, and arginine 140. Residues arginine 91, arginine 137, and arginine 140 each contribute to the CTP site. Positions 228 to 329 constitute an HD domain; sequence SGIHTLMVAQ…IKIFDKMDVW (102 aa).

This sequence belongs to the tRNA nucleotidyltransferase/poly(A) polymerase family. Bacterial CCA-adding enzyme type 1 subfamily. Monomer. Can also form homodimers and oligomers. Mg(2+) is required as a cofactor. Requires Ni(2+) as cofactor.

It carries out the reaction a tRNA precursor + 2 CTP + ATP = a tRNA with a 3' CCA end + 3 diphosphate. The catalysed reaction is a tRNA with a 3' CCA end + 2 CTP + ATP = a tRNA with a 3' CCACCA end + 3 diphosphate. Functionally, catalyzes the addition and repair of the essential 3'-terminal CCA sequence in tRNAs without using a nucleic acid template. Adds these three nucleotides in the order of C, C, and A to the tRNA nucleotide-73, using CTP and ATP as substrates and producing inorganic pyrophosphate. tRNA 3'-terminal CCA addition is required both for tRNA processing and repair. Also involved in tRNA surveillance by mediating tandem CCA addition to generate a CCACCA at the 3' terminus of unstable tRNAs. While stable tRNAs receive only 3'-terminal CCA, unstable tRNAs are marked with CCACCA and rapidly degraded. This chain is Multifunctional CCA protein, found in Aliivibrio fischeri (strain MJ11) (Vibrio fischeri).